The following is a 398-amino-acid chain: Succinate--CoA ligase [ADP-forming] subunit beta (398 aa).

The ATP-grasp domain maps to K9–E254. Residues K46, G53–G55, E109, S112, and E117 each bind ATP. Residues N209 and D223 each coordinate Mg(2+). Substrate-binding positions include N274 and G331–M333.

The protein belongs to the succinate/malate CoA ligase beta subunit family. Heterotetramer of two alpha and two beta subunits. Mg(2+) serves as cofactor.

It carries out the reaction succinate + ATP + CoA = succinyl-CoA + ADP + phosphate. The enzyme catalyses GTP + succinate + CoA = succinyl-CoA + GDP + phosphate. Its pathway is carbohydrate metabolism; tricarboxylic acid cycle; succinate from succinyl-CoA (ligase route): step 1/1. Functionally, succinyl-CoA synthetase functions in the citric acid cycle (TCA), coupling the hydrolysis of succinyl-CoA to the synthesis of either ATP or GTP and thus represents the only step of substrate-level phosphorylation in the TCA. The beta subunit provides nucleotide specificity of the enzyme and binds the substrate succinate, while the binding sites for coenzyme A and phosphate are found in the alpha subunit. This Bradyrhizobium sp. (strain BTAi1 / ATCC BAA-1182) protein is Succinate--CoA ligase [ADP-forming] subunit beta.